The primary structure comprises 251 residues: Hydroxyacylglutathione hydrolase (251 aa).

Positions 53, 55, 57, 58, 110, 127, and 165 each coordinate Zn(2+).

It belongs to the metallo-beta-lactamase superfamily. Glyoxalase II family. Monomer. Zn(2+) serves as cofactor.

The enzyme catalyses an S-(2-hydroxyacyl)glutathione + H2O = a 2-hydroxy carboxylate + glutathione + H(+). It participates in secondary metabolite metabolism; methylglyoxal degradation; (R)-lactate from methylglyoxal: step 2/2. In terms of biological role, thiolesterase that catalyzes the hydrolysis of S-D-lactoyl-glutathione to form glutathione and D-lactic acid. This chain is Hydroxyacylglutathione hydrolase, found in Escherichia coli O6:H1 (strain CFT073 / ATCC 700928 / UPEC).